A 151-amino-acid polypeptide reads, in one-letter code: Large ribosomal subunit protein uL22 (151 aa).

It belongs to the universal ribosomal protein uL22 family. Part of the 50S ribosomal subunit.

Functionally, this protein binds specifically to 23S rRNA. It makes multiple contacts with different domains of the 23S rRNA in the assembled 50S subunit and ribosome. The globular domain of the protein is located near the polypeptide exit tunnel on the outside of the subunit, while an extended beta-hairpin is found that lines the wall of the exit tunnel in the center of the 70S ribosome. This chain is Large ribosomal subunit protein uL22, found in Methanococcoides burtonii (strain DSM 6242 / NBRC 107633 / OCM 468 / ACE-M).